Reading from the N-terminus, the 65-residue chain is Large ribosomal subunit protein bL35 (65 aa).

Over residues 1–15 the composition is skewed to basic residues; the sequence is MPKMKTKKSASKRFQ. Positions 1 to 27 are disordered; sequence MPKMKTKKSASKRFQVRGSGSIKRGQA.

Belongs to the bacterial ribosomal protein bL35 family.

This chain is Large ribosomal subunit protein bL35, found in Bordetella petrii (strain ATCC BAA-461 / DSM 12804 / CCUG 43448).